A 448-amino-acid polypeptide reads, in one-letter code: Adenylosuccinate synthetase (448 aa).

Residues 36–42 and 64–66 each bind GTP; these read GDEGKGK and GHT. The active-site Proton acceptor is Asp-37. Mg(2+)-binding residues include Asp-37 and Gly-64. IMP contacts are provided by residues 37-40, 62-65, Thr-154, Arg-168, Asn-246, Thr-261, and Arg-325; these read DEGK and NAGH. The Proton donor role is filled by His-65. 321-327 serves as a coordination point for substrate; it reads VTTKRKR. Residues Arg-327, 353–355, and 436–438 contribute to the GTP site; these read KLD and GVG.

Belongs to the adenylosuccinate synthetase family. As to quaternary structure, homodimer. The cofactor is Mg(2+).

The protein localises to the cytoplasm. The catalysed reaction is IMP + L-aspartate + GTP = N(6)-(1,2-dicarboxyethyl)-AMP + GDP + phosphate + 2 H(+). It participates in purine metabolism; AMP biosynthesis via de novo pathway; AMP from IMP: step 1/2. Plays an important role in the de novo pathway and in the salvage pathway of purine nucleotide biosynthesis. Catalyzes the first committed step in the biosynthesis of AMP from IMP. This is Adenylosuccinate synthetase from Drosophila mojavensis (Fruit fly).